A 235-amino-acid polypeptide reads, in one-letter code: Cobalt transport protein CbiM (235 aa).

The next 6 membrane-spanning stretches (helical) occupy residues 6 to 26 (GVLP…FVVH), 43 to 63 (LLLA…LPSV), 85 to 105 (MAFM…HGGI), 108 to 128 (LGAN…GAYV), 133 to 153 (LGGP…LSTY), and 181 to 201 (IFAI…ILLF).

This sequence belongs to the CbiM family. As to quaternary structure, forms an energy-coupling factor (ECF) transporter complex composed of an ATP-binding protein (A component, CbiO), a transmembrane protein (T component, CbiQ) and 2 possible substrate-capture proteins (S components, CbiM and CbiN) of unknown stoichimetry.

Its subcellular location is the cell membrane. It functions in the pathway cofactor biosynthesis; adenosylcobalamin biosynthesis. Its function is as follows. Part of the energy-coupling factor (ECF) transporter complex CbiMNOQ involved in cobalt import. This Propionibacterium freudenreichii subsp. shermanii (strain ATCC 9614 / DSM 4902 / CIP 103027 / NCIMB 8099 / CIRM-BIA1) protein is Cobalt transport protein CbiM.